The primary structure comprises 353 residues: Photosystem II D2 protein (353 aa).

The residue at position 2 (Thr-2) is an N-acetylthreonine. Thr-2 bears the Phosphothreonine mark. A helical membrane pass occupies residues 41-61; sequence CAYFALGGWFTGTTFVTSWYT. Residue His-118 coordinates chlorophyll a. A helical membrane pass occupies residues 125–141; that stretch reads GFMLRQFELARPVQLRP. Residues Gln-130 and Asn-143 each contribute to the pheophytin a site. Residues 153–166 form a helical membrane-spanning segment; sequence VFLSVFLIYPLGQS. His-198 is a chlorophyll a binding site. Residues 208 to 228 form a helical membrane-spanning segment; sequence AVLLCAIHGATVENTLFEDGD. 2 residues coordinate a plastoquinone: His-215 and Phe-262. His-215 contributes to the Fe cation binding site. His-269 is a binding site for Fe cation. The helical transmembrane segment at 279-295 threads the bilayer; that stretch reads GLWMSAIGVVGLALNLR.

Belongs to the reaction center PufL/M/PsbA/D family. PSII is composed of 1 copy each of membrane proteins PsbA, PsbB, PsbC, PsbD, PsbE, PsbF, PsbH, PsbI, PsbJ, PsbK, PsbL, PsbM, PsbT, PsbX, PsbY, PsbZ, Psb30/Ycf12, at least 3 peripheral proteins of the oxygen-evolving complex and a large number of cofactors. It forms dimeric complexes. Requires The D1/D2 heterodimer binds P680, chlorophylls that are the primary electron donor of PSII, and subsequent electron acceptors. It shares a non-heme iron and each subunit binds pheophytin, quinone, additional chlorophylls, carotenoids and lipids. There is also a Cl(-1) ion associated with D1 and D2, which is required for oxygen evolution. The PSII complex binds additional chlorophylls, carotenoids and specific lipids. as cofactor. Post-translationally, only phosphorylated in mesophyll cells, phosphorylation increases when cells are grown under high rather than low light regimes (70 vs 900 umol photons/m-2/s).

The protein localises to the plastid. It localises to the chloroplast thylakoid membrane. The catalysed reaction is 2 a plastoquinone + 4 hnu + 2 H2O = 2 a plastoquinol + O2. Its function is as follows. Photosystem II (PSII) is a light-driven water:plastoquinone oxidoreductase that uses light energy to abstract electrons from H(2)O, generating O(2) and a proton gradient subsequently used for ATP formation. It consists of a core antenna complex that captures photons, and an electron transfer chain that converts photonic excitation into a charge separation. The D1/D2 (PsbA/PsbD) reaction center heterodimer binds P680, the primary electron donor of PSII as well as several subsequent electron acceptors. D2 is needed for assembly of a stable PSII complex. In Zea mays (Maize), this protein is Photosystem II D2 protein.